Consider the following 89-residue polypeptide: Small ribosomal subunit protein uS15 (89 aa).

A disordered region spans residues 1 to 22 (MALEKEEKSQIINNYQLHETDT). Over residues 10 to 22 (QIINNYQLHETDT) the composition is skewed to polar residues.

Belongs to the universal ribosomal protein uS15 family. Part of the 30S ribosomal subunit. Forms a bridge to the 50S subunit in the 70S ribosome, contacting the 23S rRNA.

One of the primary rRNA binding proteins, it binds directly to 16S rRNA where it helps nucleate assembly of the platform of the 30S subunit by binding and bridging several RNA helices of the 16S rRNA. Its function is as follows. Forms an intersubunit bridge (bridge B4) with the 23S rRNA of the 50S subunit in the ribosome. The polypeptide is Small ribosomal subunit protein uS15 (Chloroflexus aggregans (strain MD-66 / DSM 9485)).